A 334-amino-acid chain; its full sequence is MIDFSNFYQLIAKSPLSHWLETLPAQVAAWQRDALHGKFREWERAVEFLPELTPWRLDLLHSVTAESETPLSEGHQRRIENLLKNLMPWRKGPYSLYGINIDTEWRSDWKWERVLPHLSDLTGRTILDVGCGSGYHMWRMIGAGAHLAVGIDPTQLFLCQFEAVRKLLGNDQRAHLLPLGIEQLPALEAFDTVFSMGVLYHRRSPLDHLWQLKDQLAPGGELVLETLVVEGDENTVLVPGDRYAQMRNVYFIPSAAALKMWLEKCGFIDVRIVDACVTSTEEQRRTEWMTTESLADFLDPQDQRKTVEGYPAPLRAVIIATKPETQQSLAKKAR.

Residues Lys91, Trp105, Lys110, Gly130, 152–154 (DPT), 181–182 (IE), Met196, Tyr200, and Arg315 each bind carboxy-S-adenosyl-L-methionine.

Belongs to the class I-like SAM-binding methyltransferase superfamily. CmoB family. As to quaternary structure, homotetramer.

The enzyme catalyses carboxy-S-adenosyl-L-methionine + 5-hydroxyuridine(34) in tRNA = 5-carboxymethoxyuridine(34) in tRNA + S-adenosyl-L-homocysteine + H(+). Its function is as follows. Catalyzes carboxymethyl transfer from carboxy-S-adenosyl-L-methionine (Cx-SAM) to 5-hydroxyuridine (ho5U) to form 5-carboxymethoxyuridine (cmo5U) at position 34 in tRNAs. The chain is tRNA U34 carboxymethyltransferase from Klebsiella pneumoniae subsp. pneumoniae (strain ATCC 700721 / MGH 78578).